Consider the following 124-residue polypeptide: CBS domain-containing protein MJ0729 (124 aa).

CBS domains lie at 10–67 (MNKD…IEDL) and 70–124 (LIDE…YKNR).

Exhibits a pH-dependent oligomerization state: at pH 7, the dominant species is a dimer, where each monomer is a two-CBS domain protein, and at pH 4.5-4.8, the dominant species is a tetramer, with an oblong shape. At pH 2.5, there is formation of intermolecular hydrogen bonds, suggesting the presence of high-molecular weight species. The physiological dimeric species is thermal and chemically very stable.

In Methanocaldococcus jannaschii (strain ATCC 43067 / DSM 2661 / JAL-1 / JCM 10045 / NBRC 100440) (Methanococcus jannaschii), this protein is CBS domain-containing protein MJ0729.